The primary structure comprises 89 residues: Probable monothiol glutaredoxin GrlA (89 aa).

The 89-residue stretch at 1-89 (MLYMKGTPKM…EPMLRDAVAA (89 aa)) folds into the Glutaredoxin domain. Lysine 5 contributes to the glutathione binding site. Cysteine 13 contacts [2Fe-2S] cluster. Glutathione contacts are provided by residues arginine 42, phenylalanine 54, and 67-68 (SD).

The protein belongs to the glutaredoxin family. Monothiol subfamily.

The chain is Probable monothiol glutaredoxin GrlA (grlA) from Legionella pneumophila subsp. pneumophila (strain Philadelphia 1 / ATCC 33152 / DSM 7513).